A 367-amino-acid chain; its full sequence is Probable trehalose-phosphate phosphatase 4 (367 aa).

Belongs to the trehalose phosphatase family. A divalent metal cation is required as a cofactor.

The catalysed reaction is alpha,alpha-trehalose 6-phosphate + H2O = alpha,alpha-trehalose + phosphate. The protein operates within glycan biosynthesis; trehalose biosynthesis. Removes the phosphate from trehalose 6-phosphate to produce free trehalose. Trehalose accumulation in plant may improve abiotic stress tolerance. The sequence is that of Probable trehalose-phosphate phosphatase 4 (TPP4) from Oryza sativa subsp. japonica (Rice).